The primary structure comprises 189 residues: MSGIDINHKYDRKVRRTEPKSQDVYLRLLVKLYRFLQRRTNKKFNRIILKRLFMSKINRPPLSLQRIARFFKAANQPESTVVVVGTVTDDARLLVVPKLTLCALHVTQTARERILKAGGEVLTFDQLALKSPTGKNTLLLQGKRTARTACKHFGKAPGVPHSHTRPYVRSKGRKFERARGRRSSCGYKK.

Belongs to the eukaryotic ribosomal protein eL18 family.

The protein localises to the cytoplasm. The polypeptide is Large ribosomal subunit protein eL18 (RpL18) (Drosophila pseudoobscura pseudoobscura (Fruit fly)).